The sequence spans 339 residues: Neutrophil cytosol factor 4 (339 aa).

A PX domain is found at 19–140 (DVAVSANIAD…IFFYQSAYDA (122 aa)). Residues 58–60 (RYR) and 92–94 (KVY) each bind a 1,2-diacyl-sn-glycero-3-phospho-(1D-myo-inositol-3-phosphate). A Phosphothreonine modification is found at threonine 154. The 60-residue stretch at 170 to 229 (MEAPRAEALFDFTGNSKLELSFKAGDVIFLLSKINKDWLEGTSQGATGIFPGSFVKILKD) folds into the SH3 domain. One can recognise a PB1 domain in the interval 237–329 (TNWLRCYFYE…FPWKLHVTQK (93 aa)). Position 315 is a phosphoserine (serine 315).

As to quaternary structure, component of the phagocyte NADPH oxidase complex composed of an obligatory core heterodimer formed by the membrane proteins CYBA and CYBB and the cytosolic regulatory subunits NCF1/p47-phox, NCF2/p67-phox, NCF4/p40-phox and the small GTPase RAC1 or RAC2. Part of a cytosolic complex composed at least by NCF1, NCF2 and NCF4. Interacts with NCF2. Interacts with NCF1. The NCF2-NCF4 complex interacts with GBP7 (via GB1/RHD3-type G domain).

The protein localises to the cytoplasm. Its subcellular location is the cytosol. It localises to the endosome membrane. The protein resides in the membrane. Its function is as follows. Subunit of the phagocyte NADPH oxidase complex that mediates the transfer of electrons from cytosolic NADPH to O2 to produce the superoxide anion (O2(-)). In the activated complex, electrons are first transferred from NADPH to flavin adenine dinucleotide (FAD) and subsequently transferred via two heme molecules to molecular oxygen, producing superoxide through an outer-sphere reaction. Activation of the NADPH oxidase complex is initiated by the assembly of cytosolic subunits of the NADPH oxidase complex with the core NADPH oxidase complex to form a complex at the plasma membrane or phagosomal membrane. This activation process is initiated by phosphorylation dependent binding of the cytosolic NCF1/p47-phox subunit to the C-terminus of CYBA/p22-phox. The polypeptide is Neutrophil cytosol factor 4 (Mus musculus (Mouse)).